Consider the following 1009-residue polypeptide: Glutamate receptor ionotropic, delta-2 (1009 aa).

Residues 1–23 form the signal peptide; that stretch reads MKVFPAVLFLITFWSLEWEPVLP. Topologically, residues 24–566 are extracellular; that stretch reads DSIIHIGAIF…DMFACLAPFD (543 aa). N-linked (GlcNAc...) asparagine glycosylation is found at N293, N306, N390, and N426. Residues E531, V534, and D535 each contribute to the Ca(2+) site. The chain crosses the membrane as a helical span at residues 567–587; sequence LSLWACIAGTVLLVGTLVYLL. Over 588-635 the chain is Cytoplasmic; it reads NWLNPPRLPMGSVSSTTLYNSMWFVYGSFVQQGGEVPYTTLATRMMMG. A helical transmembrane segment spans residues 636–656; the sequence is VWWLFALIVISSYTANLAAFL. The Extracellular portion of the chain corresponds to 657–830; sequence TISRIENSIQ…KSGSALDIHS (174 aa). N-linked (GlcNAc...) asparagine glycosylation occurs at N713. The Ca(2+) site is built by D753, D755, and S757. A helical membrane pass occupies residues 831–851; the sequence is FAGVFFVLAAGVVLSCLIATV. Topologically, residues 852-1009 are cytoplasmic; that stretch reads ETWWTRRKGS…GNDPDRGTSI (158 aa). The interval 989–1009 is disordered; it reads YQPTPAPNFSYGNDPDRGTSI.

This sequence belongs to the glutamate-gated ion channel (TC 1.A.10.1) family. GRID2 subfamily. As to quaternary structure, tetramer; dimer of dimers. As to expression, expressed in cerebellar Purkinje cells, in crest cells in the medial octavolateral nucleus and in type I neurons of the optic tectum.

It is found in the postsynaptic cell membrane. The catalysed reaction is Ca(2+)(in) = Ca(2+)(out). It carries out the reaction Na(+)(in) = Na(+)(out). In terms of biological role, member of the ionotropic glutamate receptor family, which plays a crucial role in synaptic organization and signal transduction in the central nervous system. Although it shares structural features with ionotropic glutamate receptors, does not bind glutamate as a primary ligand. Promotes synaptogenesis and mediates the D-Serine-dependent long term depression signals and AMPA receptor endocytosis of cerebellar parallel fiber-Purkinje cell (PF-PC) synapses through the NRX1B-CBLN1-GRID2 triad complex. In the presence of neurexins and cerebellins, forms cation-selective channels that are proposed to be gated by glycine and D-serine. However, recent research disputes this ligand-gated cation channel activity. Cation-selective ion channel activity can be triggered by GRM1 in Purkinje cells. The sequence is that of Glutamate receptor ionotropic, delta-2 from Danio rerio (Zebrafish).